We begin with the raw amino-acid sequence, 421 residues long: Serine hydroxymethyltransferase (421 aa).

Residues L121 and 125 to 127 (GHL) each bind (6S)-5,6,7,8-tetrahydrofolate. At K230 the chain carries N6-(pyridoxal phosphate)lysine. (6S)-5,6,7,8-tetrahydrofolate is bound by residues E246 and 354–356 (SPF).

Belongs to the SHMT family. In terms of assembly, homodimer. It depends on pyridoxal 5'-phosphate as a cofactor.

Its subcellular location is the cytoplasm. The enzyme catalyses (6R)-5,10-methylene-5,6,7,8-tetrahydrofolate + glycine + H2O = (6S)-5,6,7,8-tetrahydrofolate + L-serine. It participates in one-carbon metabolism; tetrahydrofolate interconversion. Its pathway is amino-acid biosynthesis; glycine biosynthesis; glycine from L-serine: step 1/1. In terms of biological role, catalyzes the reversible interconversion of serine and glycine with tetrahydrofolate (THF) serving as the one-carbon carrier. This reaction serves as the major source of one-carbon groups required for the biosynthesis of purines, thymidylate, methionine, and other important biomolecules. Also exhibits THF-independent aldolase activity toward beta-hydroxyamino acids, producing glycine and aldehydes, via a retro-aldol mechanism. The sequence is that of Serine hydroxymethyltransferase from Rickettsia felis (strain ATCC VR-1525 / URRWXCal2) (Rickettsia azadi).